A 172-amino-acid polypeptide reads, in one-letter code: MDHVNPTLFHLKSLSIFTLTLLYISSPHFLLFKTLSMYENLRIFLKIIPFNLFGMKSVSLIAILLLHLFVSSDTFQLDLFHCKYYLAITWLINRDNECVIYILVGSFICCIVICEVVDKASGSSIPDCSNACGPCKPCKLVVISSTCSASEACPLVYKCLCKGKYYHVPSLT.

Residues 1–27 (MDHVNPTLFHLKSLSIFTLTLLYISSP) form the signal peptide. Intrachain disulfides connect Cys128/Cys159, Cys132/Cys138, Cys135/Cys161, and Cys147/Cys153.

Belongs to the plant cysteine rich small secretory peptide family. Epidermal patterning factor subfamily.

The protein localises to the secreted. Functionally, controls stomatal patterning. The protein is EPIDERMAL PATTERNING FACTOR-like protein 7 of Arabidopsis thaliana (Mouse-ear cress).